We begin with the raw amino-acid sequence, 605 residues long: Copper resistance protein A (605 aa).

The tat-type signal signal peptide spans 1-41; it reads MLLKTSRRTFLKGLTLSGVAGSLGVWSFNARSSLSLPVAAS. Positions 100, 102, 142, and 144 each coordinate Cu cation. Repeat copies occupy residues 382–389, 414–421, and 422–429. The tract at residues 382-429 is 3 X 8 AA tandem repeats of D-H-X-X-M-X-G-M; sequence DHSQMGGMDNSGEMMSMDGADLPDSGTSSAPMDHSSMAGMDHSRMAGM. Cu cation-binding residues include histidine 538, histidine 541, histidine 543, histidine 586, cysteine 587, histidine 588, histidine 592, and methionine 597.

It belongs to the multicopper oxidase family. CopA subfamily. Predicted to be exported by the Tat system. The position of the signal peptide cleavage has not been experimentally proven.

The protein resides in the periplasm. In terms of biological role, required for the copper-inducible expression of copper resistance. May have oxidase activity. The polypeptide is Copper resistance protein A (pcoA) (Escherichia coli).